The primary structure comprises 142 residues: Ribosome maturation factor RimP (142 aa).

It belongs to the RimP family.

Its subcellular location is the cytoplasm. In terms of biological role, required for maturation of 30S ribosomal subunits. The polypeptide is Ribosome maturation factor RimP (Nitratiruptor sp. (strain SB155-2)).